The sequence spans 1164 residues: Auxin response factor 7 (1164 aa).

Positions 127–229 form a DNA-binding region, TF-B3; the sequence is FCKTLTASDT…QLLLGIRRAN (103 aa). Disordered regions lie at residues 451 to 505, 536 to 555, 570 to 728, 765 to 858, and 903 to 930; these read HNNL…QQQL, QQLQSQQHSNNNQSQSQQQQ, HQQP…LLQQ, FLSP…SSSG, and KSKASLTDHQLEASASGTSYGLDGGENN. The span at 464–489 shows a compositional bias: polar residues; it reads LSFQTPHGGISSSNLQFNKQNQQAPM. A compositionally biased stretch (low complexity) spans 570 to 635; sequence HQQPLQQQTQ…SQQASTHHLQ (66 aa). Over residues 637-651 the composition is skewed to polar residues; that stretch reads QLVSGSMASSVITPP. Residues 652–671 show a composition bias toward low complexity; sequence SSSLNQSFQQQQQQSKQLQQ. Residues 678 to 710 are compositionally biased toward polar residues; it reads ASTSQSSVIETSKSSSNLMSAPPQETQFSRQVE. 2 stretches are compositionally biased toward low complexity: residues 711–728 and 765–790; these read QQQPPGLNGQNQQTLLQQ and FLSPQSQLPHHQLQSQQLQQLPTLSQ. Positions 791-808 are enriched in polar residues; sequence GHQFPSSCTNNGLSTLQP. The segment covering 841–851 has biased composition (low complexity); sequence PSSSTSPSTNN. The span at 903-921 shows a compositional bias: polar residues; the sequence is KSKASLTDHQLEASASGTS. In terms of domain architecture, PB1 spans 1037-1130; sequence RTYTKVQKRG…EVQQMSLDGN (94 aa). Residues 1145 to 1164 form a disordered region; the sequence is DSGNAWRGHYDDNSATSFNR.

Belongs to the ARF family. As to quaternary structure, homodimers and heterodimers. Interacts with the auxin-responsive proteins IAA1 and IAA12 (BODENLOS). Interacts (via PB1 domain) with IAA17 (via PB1 domain). Interacts with IAA19. Interacts with ARF5. Binds to JMJ30. Binds to ATXR2 in the nucleus. As to expression, expressed in the whole plant.

The protein resides in the nucleus. In terms of biological role, auxin response factors (ARFs) are transcriptional factors that bind specifically to the DNA sequence 5'-TGTCTC-3' found in the auxin-responsive promoter elements (AuxREs). Acts as a transcriptional activator of several tropic stimulus-induced (TSI) genes, including SAUR50. Formation of heterodimers with Aux/IAA proteins may alter their ability to modulate early auxin response genes expression. Required for differential growth responses of aerial tissues. Involved in ethylene responses. Regulates lateral root formation through direct regulation of LBD16 and/or LBD29. Functionally redundant with ARF19. Mediates embryo axis formation and vascular tissues differentiation. Functionally redundant with ARF5. Involved in cellular dedifferentiation during callus formation on callus-inducing medium (CIM) and in an ATXR2-dependent manner. This chain is Auxin response factor 7, found in Arabidopsis thaliana (Mouse-ear cress).